The primary structure comprises 60 residues: Cytotoxin 2 (60 aa).

Intrachain disulfides connect Cys3–Cys21, Cys14–Cys38, Cys42–Cys53, and Cys54–Cys59.

Belongs to the three-finger toxin family. Short-chain subfamily. Type IA cytotoxin sub-subfamily. As to quaternary structure, monomer in solution; Homodimer and oligomer in the presence of negatively charged lipids forming a pore with a size ranging between 20 and 30 Angstroms. Expressed by the venom gland.

It localises to the secreted. It is found in the target cell membrane. Its function is as follows. This three-finger cytotoxin is a basic protein that interacts and penetrates into the cell membrane, with the tips of all the three loops. Cytotoxins which have a Pro-30 (P-type) interacts with membrane stronger that those which have a 'Ser-28' (S-type). CTII interacts with membrane stronger than CTI. In Naja oxiana (Central Asian cobra), this protein is Cytotoxin 2.